Here is a 373-residue protein sequence, read N- to C-terminus: Dimethylallyltryptophan synthase CymD (373 aa).

L-tryptophan-binding residues include Asp-55, Val-56, and Glu-64. The active-site Nucleophile is Glu-64. The dimethylallyl diphosphate site is built by Gln-77, Lys-146, Trp-148, Arg-205, and Lys-207. Arg-211 is an L-tryptophan binding site. Tyr-274 is a dimethylallyl diphosphate binding site. Tyr-326 contributes to the L-tryptophan binding site. Dimethylallyl diphosphate contacts are provided by Arg-337, Lys-339, and Tyr-341. The 28-residue stretch at Met-346 to Glu-373 folds into the FtsK domain.

Its function is as follows. Dimethylallyltryptophan synthase; part of the gene cluster that mediates the biosynthesis of cyclic heptapeptides, known as cyclomarins and also of cyclic dipeptides, called cyclomarazines, which have both antimicrobial and cytotoxic effects. Catalyzes the reverse N-prenylation of monomeric L-tryptophan with dimethylallyl diphosphate (DMAPP) to form N-(1,1-dimethylallyl)-tryptophan (r-N-DMAT). The formation of r-N-DMAT appears to proceed via the deprotonation of the indole nitrogen of tryptophan, which facilitates a nucleophilic attack on the carbocation that is forming on the dimethylallyl group as the diphosphate dissociates. The N-(1,1-dimethylallyl)-tryptophan produced by CymD is combined with a range of standard and nonproteinogenic amino acid substrates to synthesize the peptides, a process that is probably catalyzed by the non-canonical nonribosomal peptide synthetase (NRPS), CymA. Other proteins in the cluster catalyze further modifications of the peptides including CymV which catalyzes the oxidation of olefinic cyclomarins and cyclomarazines to their respective epoxide derivatives. Utilizes only DMAPP as the prenyl donor and has no requirement for divalent cations. This is Dimethylallyltryptophan synthase CymD from Salinispora arenicola (strain CNS-205).